The primary structure comprises 87 residues: MQASDRFNINSQLEHLQAKYVGTGHADLSRFEWTVNIQRDSYASYIGHYPMLSYFAIAENESIGRERYNFMQKMLLPCGLPPEREDE.

The protein belongs to the SF3B5 family.

This is an uncharacterized protein from Arabidopsis thaliana (Mouse-ear cress).